The chain runs to 434 residues: ATP-dependent protease ATPase subunit HslU (434 aa).

Residues I18, 60-65, D247, E312, and R384 each bind ATP; that span reads GVGKTE.

The protein belongs to the ClpX chaperone family. HslU subfamily. A double ring-shaped homohexamer of HslV is capped on each side by a ring-shaped HslU homohexamer. The assembly of the HslU/HslV complex is dependent on binding of ATP.

It localises to the cytoplasm. Functionally, ATPase subunit of a proteasome-like degradation complex; this subunit has chaperone activity. The binding of ATP and its subsequent hydrolysis by HslU are essential for unfolding of protein substrates subsequently hydrolyzed by HslV. HslU recognizes the N-terminal part of its protein substrates and unfolds these before they are guided to HslV for hydrolysis. The chain is ATP-dependent protease ATPase subunit HslU from Brucella melitensis biotype 1 (strain ATCC 23456 / CCUG 17765 / NCTC 10094 / 16M).